Here is a 100-residue protein sequence, read N- to C-terminus: MRLTPHEQERLLLSYAAELARRRRARGLRLNHPEAIAVIADHILEGARDGRTVAELMASGREVLGRDDVMEGVPEMLAEVQVEATFPDGTKLVTVHQPIA.

This sequence belongs to the urease gamma subunit family. In terms of assembly, heterotrimer of UreA (gamma), UreB (beta) and UreC (alpha) subunits. Three heterotrimers associate to form the active enzyme.

Its subcellular location is the cytoplasm. The enzyme catalyses urea + 2 H2O + H(+) = hydrogencarbonate + 2 NH4(+). Its pathway is nitrogen metabolism; urea degradation; CO(2) and NH(3) from urea (urease route): step 1/1. This is Urease subunit gamma from Mycobacterium bovis (strain ATCC BAA-935 / AF2122/97).